The primary structure comprises 415 residues: Transcription termination factor Rho (415 aa).

In terms of domain architecture, Rho RNA-BD spans 52–119; the sequence is ADIASGVLDI…TDVVRVNGRT (68 aa). ATP contacts are provided by residues 161–166, 173–178, and Arg-204; these read GKGQRG and KTGKTV.

It belongs to the Rho family. In terms of assembly, homohexamer. The homohexamer assembles into an open ring structure.

Facilitates transcription termination by a mechanism that involves Rho binding to the nascent RNA, activation of Rho's RNA-dependent ATPase activity, and release of the mRNA from the DNA template. This Streptomyces coelicolor (strain ATCC BAA-471 / A3(2) / M145) protein is Transcription termination factor Rho.